Here is a 112-residue protein sequence, read N- to C-terminus: Gonad-inhibiting hormone (112 aa).

A signal peptide spans 1–31 (MVTRVGSGFSVQRVWLLLVIVVVLCGSVTQQ). Intrachain disulfides connect Cys41–Cys78, Cys58–Cys74, and Cys61–Cys87. Ala109 is modified (alanine amide).

As to expression, produced in the eyestalk X-organ sinus gland complex of male and female lobsters.

It localises to the secreted. Its function is as follows. Inhibits vitellogenesis in female animals. Plays a prominent role in the regulation of reproduction/molting processes. This Homarus americanus (American lobster) protein is Gonad-inhibiting hormone.